The primary structure comprises 543 residues: Exodeoxyribonuclease 7 large subunit (543 aa).

The interval 498–543 (VTGEGDKASPPPQAASATTTPAPGRPNPLPKSPKKSEPPAGQGSLF) is disordered.

Belongs to the XseA family. Heterooligomer composed of large and small subunits.

Its subcellular location is the cytoplasm. The enzyme catalyses Exonucleolytic cleavage in either 5'- to 3'- or 3'- to 5'-direction to yield nucleoside 5'-phosphates.. Bidirectionally degrades single-stranded DNA into large acid-insoluble oligonucleotides, which are then degraded further into small acid-soluble oligonucleotides. The protein is Exodeoxyribonuclease 7 large subunit of Allorhizobium ampelinum (strain ATCC BAA-846 / DSM 112012 / S4) (Agrobacterium vitis (strain S4)).